The following is a 189-amino-acid chain: UPF0301 protein RC0043 (189 aa).

The protein belongs to the UPF0301 (AlgH) family.

This chain is UPF0301 protein RC0043, found in Rickettsia conorii (strain ATCC VR-613 / Malish 7).